A 505-amino-acid polypeptide reads, in one-letter code: Probable cytosol aminopeptidase (505 aa).

Residues K269 and D274 each coordinate Mn(2+). K281 is an active-site residue. Residues D292, D351, and E353 each contribute to the Mn(2+) site. R355 is a catalytic residue.

It belongs to the peptidase M17 family. Mn(2+) is required as a cofactor.

It is found in the cytoplasm. It carries out the reaction Release of an N-terminal amino acid, Xaa-|-Yaa-, in which Xaa is preferably Leu, but may be other amino acids including Pro although not Arg or Lys, and Yaa may be Pro. Amino acid amides and methyl esters are also readily hydrolyzed, but rates on arylamides are exceedingly low.. The enzyme catalyses Release of an N-terminal amino acid, preferentially leucine, but not glutamic or aspartic acids.. In terms of biological role, presumably involved in the processing and regular turnover of intracellular proteins. Catalyzes the removal of unsubstituted N-terminal amino acids from various peptides. The polypeptide is Probable cytosol aminopeptidase (Rhodococcus jostii (strain RHA1)).